The chain runs to 260 residues: Putative nudix hydrolase 6 (260 aa).

One can recognise a Nudix hydrolase domain in the interval 113 to 257; the sequence is PNHAADPIVS…SHFIDLLKES (145 aa). The Nudix box signature appears at 148-170; sequence GMVDAGEHVSQTLRREFAEEAMH. Residues Glu163 and Glu167 each contribute to the Mg(2+) site.

It belongs to the Nudix hydrolase family. Requires Mg(2+) as cofactor. It depends on Mn(2+) as a cofactor.

In terms of biological role, probably mediates the hydrolysis of some nucleoside diphosphate derivatives. The protein is Putative nudix hydrolase 6 (ndx-6) of Caenorhabditis elegans.